A 360-amino-acid chain; its full sequence is Autoinducer 2 import system permease protein LsrC (360 aa).

9 helical membrane-spanning segments follow: residues 18–38, 45–65, 76–96, 99–119, 121–141, 161–181, 219–239, 255–275, and 290–310; these read TALL…RNYF, MIFS…MVML, ITGL…GLAL, LFAL…VTWL, IPAI…MLLL, ILFS…AMAL, MNGV…GFIP, VLGG…ILGA, and LPAW…LVFD. Residues 334-360 are disordered; the sequence is VAPDKKVKSNNNKAPSSKSFTKKEVVR. Low complexity predominate over residues 342–352; the sequence is SNNNKAPSSKS.

It belongs to the binding-protein-dependent transport system permease family. AraH/RbsC subfamily. The complex is composed of two ATP-binding proteins (LsrA), two transmembrane proteins (LsrC and LsrD) and a solute-binding protein (LsrB).

It is found in the cell inner membrane. Part of the ABC transporter complex LsrABCD involved in autoinducer 2 (AI-2) import. Probably responsible for the translocation of the substrate across the membrane. The chain is Autoinducer 2 import system permease protein LsrC (lsrC) from Yersinia enterocolitica serotype O:8 / biotype 1B (strain NCTC 13174 / 8081).